The following is a 90-amino-acid chain: Acylphosphatase (90 aa).

One can recognise an Acylphosphatase-like domain in the interval 4-90 (RWRFLIEGSV…TGNDWFDVRT (87 aa)). Residues Arg-19 and Asn-37 contribute to the active site.

The protein belongs to the acylphosphatase family.

The catalysed reaction is an acyl phosphate + H2O = a carboxylate + phosphate + H(+). This chain is Acylphosphatase (acyP), found in Synechococcus sp. (strain CC9311).